Consider the following 149-residue polypeptide: MERTFLMIKPDGVQRNLVGEIIQRFETKGFTLVGLKMMQVSSELAEKHYAVHKERPFFRSLVDFITSSPVVAMVWQGEGVIASARKIIGATNPLNAEPGTIRGDFGISVGRNLIHGSDGPDTAKDEVSLWFSDAELANWTPAITPWVVE.

The ATP site is built by Lys-9, Phe-57, Arg-85, Thr-91, Arg-102, and Asn-112. Residue His-115 is the Pros-phosphohistidine intermediate of the active site.

Belongs to the NDK family. As to quaternary structure, homotetramer. Mg(2+) is required as a cofactor.

It localises to the cytoplasm. It catalyses the reaction a 2'-deoxyribonucleoside 5'-diphosphate + ATP = a 2'-deoxyribonucleoside 5'-triphosphate + ADP. It carries out the reaction a ribonucleoside 5'-diphosphate + ATP = a ribonucleoside 5'-triphosphate + ADP. Major role in the synthesis of nucleoside triphosphates other than ATP. The ATP gamma phosphate is transferred to the NDP beta phosphate via a ping-pong mechanism, using a phosphorylated active-site intermediate. This is Nucleoside diphosphate kinase from Microcystis aeruginosa (strain NIES-843 / IAM M-2473).